The chain runs to 401 residues: Nicotinate phosphoribosyltransferase (401 aa).

At His224 the chain carries Phosphohistidine; by autocatalysis.

It belongs to the NAPRTase family. Post-translationally, transiently phosphorylated on a His residue during the reaction cycle. Phosphorylation strongly increases the affinity for substrates and increases the rate of nicotinate D-ribonucleotide production. Dephosphorylation regenerates the low-affinity form of the enzyme, leading to product release.

It catalyses the reaction nicotinate + 5-phospho-alpha-D-ribose 1-diphosphate + ATP + H2O = nicotinate beta-D-ribonucleotide + ADP + phosphate + diphosphate. Its pathway is cofactor biosynthesis; NAD(+) biosynthesis; nicotinate D-ribonucleotide from nicotinate: step 1/1. Functionally, catalyzes the synthesis of beta-nicotinate D-ribonucleotide from nicotinate and 5-phospho-D-ribose 1-phosphate at the expense of ATP. The protein is Nicotinate phosphoribosyltransferase of Pseudomonas putida (strain ATCC 47054 / DSM 6125 / CFBP 8728 / NCIMB 11950 / KT2440).